Here is a 326-residue protein sequence, read N- to C-terminus: Transposase InsH for insertion sequence element IS5A (326 aa).

This sequence belongs to the transposase 11 family.

Its function is as follows. Involved in the transposition of the insertion sequence IS5. The sequence is that of Transposase InsH for insertion sequence element IS5A (insH1) from Escherichia coli (strain K12).